A 457-amino-acid chain; its full sequence is Siroheme synthase (457 aa).

Residues 1 to 204 (MDHLPIFCQL…NDQKAITETT (204 aa)) are precorrin-2 dehydrogenase /sirohydrochlorin ferrochelatase. NAD(+) is bound by residues 22–23 (DV) and 43–44 (LA). Ser-128 carries the phosphoserine modification. A uroporphyrinogen-III C-methyltransferase region spans residues 216-457 (GEVVLVGAGP…RDKLNWFSNH (242 aa)). Position 225 (Pro-225) interacts with S-adenosyl-L-methionine. Catalysis depends on Asp-248, which acts as the Proton acceptor. Lys-270 functions as the Proton donor in the catalytic mechanism. S-adenosyl-L-methionine contacts are provided by residues 301–303 (GGD), Ile-306, 331–332 (TA), Met-382, and Gly-411.

In the N-terminal section; belongs to the precorrin-2 dehydrogenase / sirohydrochlorin ferrochelatase family. The protein in the C-terminal section; belongs to the precorrin methyltransferase family.

The catalysed reaction is uroporphyrinogen III + 2 S-adenosyl-L-methionine = precorrin-2 + 2 S-adenosyl-L-homocysteine + H(+). It catalyses the reaction precorrin-2 + NAD(+) = sirohydrochlorin + NADH + 2 H(+). It carries out the reaction siroheme + 2 H(+) = sirohydrochlorin + Fe(2+). It functions in the pathway cofactor biosynthesis; adenosylcobalamin biosynthesis; precorrin-2 from uroporphyrinogen III: step 1/1. It participates in cofactor biosynthesis; adenosylcobalamin biosynthesis; sirohydrochlorin from precorrin-2: step 1/1. Its pathway is porphyrin-containing compound metabolism; siroheme biosynthesis; precorrin-2 from uroporphyrinogen III: step 1/1. The protein operates within porphyrin-containing compound metabolism; siroheme biosynthesis; siroheme from sirohydrochlorin: step 1/1. It functions in the pathway porphyrin-containing compound metabolism; siroheme biosynthesis; sirohydrochlorin from precorrin-2: step 1/1. In terms of biological role, multifunctional enzyme that catalyzes the SAM-dependent methylations of uroporphyrinogen III at position C-2 and C-7 to form precorrin-2 via precorrin-1. Then it catalyzes the NAD-dependent ring dehydrogenation of precorrin-2 to yield sirohydrochlorin. Finally, it catalyzes the ferrochelation of sirohydrochlorin to yield siroheme. In Escherichia coli O157:H7 (strain EC4115 / EHEC), this protein is Siroheme synthase.